Consider the following 204-residue polypeptide: Histone H3-like centromeric protein CSE4 (204 aa).

The tract at residues 68-107 (RVAEPAAAESRADGAREEERAARPARPRETRRIAKKPQRY) is disordered. Basic and acidic residues predominate over residues 77–99 (SRADGAREEERAARPARPRETRR). Residues 89 to 202 (ARPARPRETR…MQLARRIRGQ (114 aa)) are H3-like.

The protein belongs to the histone H3 family. As to quaternary structure, component of centromeric nucleosomes, where DNA is wrapped around a histone octamer core. The octamer contains two molecules each of H2A, H2B, CSE4/CENPA and H4 assembled in one CSE4-H4 heterotetramer and two H2A-H2B heterodimers. Interacts with the inner kinetochore. Post-translationally, ubiquitinated. Is degraded through ubiquitin-mediated proteolysis when not protected by its association to the kinetochore.

It localises to the nucleus. Its subcellular location is the chromosome. It is found in the centromere. Functionally, histone H3-like nucleosomal protein that is specifically found in centromeric nucleosomes. Replaces conventional H3 in the nucleosome core of centromeric chromatin that serves as an assembly site for the inner kinetochore. Required for recruitment and assembly of kinetochore proteins, mitotic progression and chromosome segregation. May serve as an epigenetic mark that propagates centromere identity through replication and cell division. This Eremothecium gossypii (strain ATCC 10895 / CBS 109.51 / FGSC 9923 / NRRL Y-1056) (Yeast) protein is Histone H3-like centromeric protein CSE4 (CSE4).